We begin with the raw amino-acid sequence, 316 residues long: Transaldolase (316 aa).

The active-site Schiff-base intermediate with substrate is Lys-131.

Belongs to the transaldolase family. Type 1 subfamily. As to quaternary structure, homodimer.

The protein resides in the cytoplasm. It catalyses the reaction D-sedoheptulose 7-phosphate + D-glyceraldehyde 3-phosphate = D-erythrose 4-phosphate + beta-D-fructose 6-phosphate. It functions in the pathway carbohydrate degradation; pentose phosphate pathway; D-glyceraldehyde 3-phosphate and beta-D-fructose 6-phosphate from D-ribose 5-phosphate and D-xylulose 5-phosphate (non-oxidative stage): step 2/3. Its function is as follows. Transaldolase is important for the balance of metabolites in the pentose-phosphate pathway. The chain is Transaldolase from Chromohalobacter salexigens (strain ATCC BAA-138 / DSM 3043 / CIP 106854 / NCIMB 13768 / 1H11).